We begin with the raw amino-acid sequence, 556 residues long: Serine/threonine-protein kinase PksC (556 aa).

A Protein kinase domain is found at 20–287; it reads YQLRDLLGEG…SAEAMRDECL (268 aa). ATP contacts are provided by residues 26–34 and lysine 49; that span reads LGEGGMASV. Catalysis depends on aspartate 151, which acts as the Proton acceptor. Disordered stretches follow at residues 300 to 403 and 435 to 485; these read IVPG…PGGK and EDPE…DPDK. The span at 336-348 shows a compositional bias: pro residues; sequence QPTPSPGPNPYGT. 2 stretches are compositionally biased toward low complexity: residues 360–381 and 445–458; these read YPQQ…QAAA and STAS…KAAG. The span at 461-475 shows a compositional bias: basic and acidic residues; it reads GPDKEKTIEKDKCTE. One can recognise a PASTA domain in the interval 482 to 550; sequence DPDKIQVPDF…MPEIQLKVST (69 aa).

Belongs to the protein kinase superfamily. Ser/Thr protein kinase family.

The enzyme catalyses L-seryl-[protein] + ATP = O-phospho-L-seryl-[protein] + ADP + H(+). It catalyses the reaction L-threonyl-[protein] + ATP = O-phospho-L-threonyl-[protein] + ADP + H(+). In Streptomyces coelicolor (strain ATCC BAA-471 / A3(2) / M145), this protein is Serine/threonine-protein kinase PksC (pksC).